We begin with the raw amino-acid sequence, 257 residues long: Phycoerythrobilin:ferredoxin oxidoreductase (257 aa).

Belongs to the HY2 family.

It catalyses the reaction (3Z)-phycoerythrobilin + oxidized 2[4Fe-4S]-[ferredoxin] = 15,16-dihydrobiliverdin + reduced 2[4Fe-4S]-[ferredoxin] + 2 H(+). Its function is as follows. Catalyzes the two-electron reduction of the C2 and C3(1) diene system of 15,16-dihydrobiliverdin. The chain is Phycoerythrobilin:ferredoxin oxidoreductase from Synechococcus sp. (strain CC9311).